Reading from the N-terminus, the 315-residue chain is 4-hydroxy-3-methylbut-2-enyl diphosphate reductase (315 aa).

Cysteine 12 is a [4Fe-4S] cluster binding site. (2E)-4-hydroxy-3-methylbut-2-enyl diphosphate is bound by residues histidine 41 and histidine 74. Dimethylallyl diphosphate-binding residues include histidine 41 and histidine 74. Isopentenyl diphosphate-binding residues include histidine 41 and histidine 74. Cysteine 96 contacts [4Fe-4S] cluster. Histidine 124 provides a ligand contact to (2E)-4-hydroxy-3-methylbut-2-enyl diphosphate. Histidine 124 lines the dimethylallyl diphosphate pocket. Histidine 124 lines the isopentenyl diphosphate pocket. Glutamate 126 serves as the catalytic Proton donor. Threonine 168 serves as a coordination point for (2E)-4-hydroxy-3-methylbut-2-enyl diphosphate. Cysteine 198 contributes to the [4Fe-4S] cluster binding site. Positions 226, 227, 228, and 270 each coordinate (2E)-4-hydroxy-3-methylbut-2-enyl diphosphate. 4 residues coordinate dimethylallyl diphosphate: serine 226, serine 227, asparagine 228, and serine 270. The isopentenyl diphosphate site is built by serine 226, serine 227, asparagine 228, and serine 270.

This sequence belongs to the IspH family. Requires [4Fe-4S] cluster as cofactor.

The enzyme catalyses isopentenyl diphosphate + 2 oxidized [2Fe-2S]-[ferredoxin] + H2O = (2E)-4-hydroxy-3-methylbut-2-enyl diphosphate + 2 reduced [2Fe-2S]-[ferredoxin] + 2 H(+). The catalysed reaction is dimethylallyl diphosphate + 2 oxidized [2Fe-2S]-[ferredoxin] + H2O = (2E)-4-hydroxy-3-methylbut-2-enyl diphosphate + 2 reduced [2Fe-2S]-[ferredoxin] + 2 H(+). The protein operates within isoprenoid biosynthesis; dimethylallyl diphosphate biosynthesis; dimethylallyl diphosphate from (2E)-4-hydroxy-3-methylbutenyl diphosphate: step 1/1. It participates in isoprenoid biosynthesis; isopentenyl diphosphate biosynthesis via DXP pathway; isopentenyl diphosphate from 1-deoxy-D-xylulose 5-phosphate: step 6/6. Functionally, catalyzes the conversion of 1-hydroxy-2-methyl-2-(E)-butenyl 4-diphosphate (HMBPP) into a mixture of isopentenyl diphosphate (IPP) and dimethylallyl diphosphate (DMAPP). Acts in the terminal step of the DOXP/MEP pathway for isoprenoid precursor biosynthesis. The chain is 4-hydroxy-3-methylbut-2-enyl diphosphate reductase from Pseudomonas syringae pv. syringae (strain B728a).